Reading from the N-terminus, the 251-residue chain is uncharacterized protein (251 aa).

A signal peptide spans 1–18 (MRILIILSIILCSLFARA).

This sequence belongs to the MlaA family.

This is an uncharacterized protein from Rickettsia felis (strain ATCC VR-1525 / URRWXCal2) (Rickettsia azadi).